The following is a 423-amino-acid chain: D-tagatose-1,6-bisphosphate aldolase subunit GatZ (423 aa).

It belongs to the GatZ/KbaZ family. GatZ subfamily. As to quaternary structure, forms a complex with GatY.

The protein operates within carbohydrate metabolism; D-tagatose 6-phosphate degradation; D-glyceraldehyde 3-phosphate and glycerone phosphate from D-tagatose 6-phosphate: step 2/2. Functionally, component of the tagatose-1,6-bisphosphate aldolase GatYZ that is required for full activity and stability of the Y subunit. Could have a chaperone-like function for the proper and stable folding of GatY. When expressed alone, GatZ does not show any aldolase activity. Is involved in the catabolism of galactitol. This Salmonella paratyphi B (strain ATCC BAA-1250 / SPB7) protein is D-tagatose-1,6-bisphosphate aldolase subunit GatZ.